The primary structure comprises 280 residues: Probable formate transporter (280 aa).

Transmembrane regions (helical) follow at residues 33–49 (LSFV…LLAE), 67–83 (LVFG…VVIA), 116–133 (SWVF…VLAY), 177–195 (FWRA…YLAV), 204–219 (SFGI…CIGF), and 253–272 (LGNI…FTYL).

It belongs to the FNT transporter (TC 1.A.16) family.

Its subcellular location is the cell membrane. Functionally, may act as a formate transporter. This Methanobacterium formicicum protein is Probable formate transporter (fdhC).